The chain runs to 90 residues: U7-theraphotoxin-Hhn1a 7 (90 aa).

The N-terminal stretch at 1–19 (MKTAIFTVVLALAVFAVLS) is a signal peptide. Residues 20-50 (FGWEANEKALSEGFTELIHEKEAASETEARE) constitute a propeptide that is removed on maturation. Cystine bridges form between Cys51–Cys65, Cys58–Cys70, and Cys64–Cys81.

Belongs to the neurotoxin 10 (Hwtx-1) family. 13 (Hntx-13) subfamily. Expressed by the venom gland.

The protein localises to the secreted. Its function is as follows. Ion channel inhibitor. This chain is U7-theraphotoxin-Hhn1a 7, found in Cyriopagopus hainanus (Chinese bird spider).